The sequence spans 308 residues: High-affinity branched-chain amino acid transport system permease protein LivH (308 aa).

The Cytoplasmic portion of the chain corresponds to 1-21; the sequence is MSEQFLYFLQQMFNGVTLGST. Residues 22–42 form a helical membrane-spanning segment; it reads YALIAIGYTMVYGIIGMINFA. The Periplasmic portion of the chain corresponds to 43-45; sequence HGE. A helical transmembrane segment spans residues 46 to 66; sequence VYMIGSYVSFMIIAALMMMGI. The Cytoplasmic segment spans residues 67 to 68; that stretch reads DT. A helical transmembrane segment spans residues 69 to 89; sequence GWLLVAAGFVGAIVIASAYGW. Residues 90-104 are Periplasmic-facing; it reads SIERVAYRPVRNSKR. A helical membrane pass occupies residues 105–125; that stretch reads LIALISAIGMSIFLQNYVSLT. Residues 126–154 lie on the Cytoplasmic side of the membrane; that stretch reads EGSRDVALPSLFNGQWVVGHSENFSASIT. Residues 155 to 175 form a helical membrane-spanning segment; the sequence is TMQAVIWIVTFLAMLALTIFI. Residues 176–203 lie on the Periplasmic side of the membrane; the sequence is RYSRMGRACRACAEDLKMASLLGINTDR. The chain crosses the membrane as a helical span at residues 204-224; sequence VIALTFVIGAAMAAVAGVLLG. Over 225–245 the chain is Cytoplasmic; it reads QFYGVINPYIGFMAGMKAFTA. The chain crosses the membrane as a helical span at residues 246 to 266; the sequence is AVLGGIGSIPGAMIGGLILGI. Topologically, residues 267–280 are periplasmic; it reads AEALSSAYLSTEYK. Residues 281–301 traverse the membrane as a helical segment; that stretch reads DVVSFALLILVLLVMPTGILG. Residues 302 to 308 lie on the Cytoplasmic side of the membrane; that stretch reads RPEVEKV.

Belongs to the binding-protein-dependent transport system permease family. LivHM subfamily.

The protein resides in the cell inner membrane. Part of the binding-protein-dependent transport system for branched-chain amino acids. Probably responsible for the translocation of the substrates across the membrane. In Escherichia coli O157:H7, this protein is High-affinity branched-chain amino acid transport system permease protein LivH (livH).